A 584-amino-acid polypeptide reads, in one-letter code: DNA damage-binding protein CMR1 (584 aa).

Over residues 29-44 (SATDSISREIPNQRQA) the composition is skewed to polar residues. The segment at 29 to 90 (SATDSISREI…TEEYQKVKEE (62 aa)) is disordered. The span at 59–68 (IKKEPQEPSR) shows a compositional bias: basic and acidic residues. The stretch at 76–110 (VTMENTEEYQKVKEEMEEAERKKKELEKLKSTRLF) forms a coiled coil. WD repeat units lie at residues 226–267 (ITHQ…DEDP), 274–314 (PHGR…SSEV), 373–413 (LHDK…KSNS), 431–469 (SSRL…SELP), 506–549 (GRWV…LAHL), and 553–584 (EKVG…YLFE).

It belongs to the WD repeat DDB2/WDR76 family.

DNA-binding protein that binds to both single- and double-stranded DNA. Binds preferentially to UV-damaged DNA. May be involved in DNA-metabolic processes. This is DNA damage-binding protein CMR1 from Debaryomyces hansenii (strain ATCC 36239 / CBS 767 / BCRC 21394 / JCM 1990 / NBRC 0083 / IGC 2968) (Yeast).